We begin with the raw amino-acid sequence, 329 residues long: GMP reductase (329 aa).

Cys178 (thioimidate intermediate) is an active-site residue. 207–230 (IIADGGIRNNGDIAKSIRFGATMC) contributes to the NADP(+) binding site.

This sequence belongs to the IMPDH/GMPR family. GuaC type 2 subfamily.

The enzyme catalyses IMP + NH4(+) + NADP(+) = GMP + NADPH + 2 H(+). Catalyzes the irreversible NADPH-dependent deamination of GMP to IMP. It functions in the conversion of nucleobase, nucleoside and nucleotide derivatives of G to A nucleotides, and in maintaining the intracellular balance of A and G nucleotides. The protein is GMP reductase of Lacticaseibacillus paracasei (strain ATCC 334 / BCRC 17002 / CCUG 31169 / CIP 107868 / KCTC 3260 / NRRL B-441) (Lactobacillus paracasei).